The primary structure comprises 549 residues: uncharacterized protein (549 aa).

Helical transmembrane passes span 1-21, 28-48, 50-70, 85-105, 106-126, 165-185, 187-207, 222-242, 278-298, 310-330, 361-381, and 398-418; these read MEIF…GVVT, IPLP…TFGL, VEFD…FADG, IFGL…FLIY, WVVP…LSPT, FAVA…TVEF, KVAI…GRSL, IVLL…IGVS, LEFV…PGIL, NVEI…LMLV, ILIA…VLSI, and VFLA…MLPI.

The protein belongs to the monovalent cation:proton antiporter 1 (CPA1) transporter (TC 2.A.36) family.

The protein resides in the cell inner membrane. This is an uncharacterized protein from Escherichia coli (strain K12).